The primary structure comprises 613 residues: Putative two-component response regulator ARR21 (613 aa).

Residues asparagine 17–leucine 131 form the Response regulatory domain. 4-aspartylphosphate is present on aspartate 68. A compositionally biased stretch (polar residues) spans lysine 178 to aspartate 195. A disordered region spans residues lysine 178–lysine 223. A Nuclear localization signal motif is present at residues lysine 221–lysine 224. A DNA-binding region (myb-like GARP) is located at residues lysine 224–arginine 274.

This sequence belongs to the ARR family. Type-B subfamily. As to quaternary structure, binds the target DNA as a monomer. Two-component system major event consists of a His-to-Asp phosphorelay between a sensor histidine kinase (HK) and a response regulator (RR). In plants, the His-to-Asp phosphorelay involves an additional intermediate named Histidine-containing phosphotransfer protein (HPt). This multistep phosphorelay consists of a His-Asp-His-Asp sequential transfer of a phosphate group between first a His and an Asp of the HK protein, followed by the transfer to a conserved His of the HPt protein and finally the transfer to an Asp in the receiver domain of the RR protein. Mainly expressed in siliques. Also found in germinating seedlings, stems, flowers and roots, but not in rosette leaves.

It is found in the nucleus. Functionally, putative transcriptional activator that binds specifically to the DNA sequence 5'-[AG]GATT-3'. Functions as a response regulator involved in His-to-Asp phosphorelay signal transduction system. Phosphorylation of the Asp residue in the receiver domain activates the ability of the protein to promote the transcription of target genes. Could directly activate some type-A response regulators in response to cytokinins. This is Putative two-component response regulator ARR21 (ARR21) from Arabidopsis thaliana (Mouse-ear cress).